A 1114-amino-acid chain; its full sequence is Lysylphosphatidylglycerol biosynthesis bifunctional protein LysX (1114 aa).

The span at 1–11 (MSASTETHHAS) shows a compositional bias: basic and acidic residues. The disordered stretch occupies residues 1–26 (MSASTETHHASEAAVPTAPRPRPGLG). The interval 1-618 (MSASTETHHA…GLHSDGSAPG (618 aa)) is phosphatidylglycerol lysyltransferase. Helical transmembrane passes span 38–58 (IAGL…ISPV), 77–97 (APDT…ALAS), 101–121 (IAWW…VIVS), 126–146 (NVNA…LIAA), 164–184 (GVLI…VELF), and 219–239 (FVNT…VITL). The lysine--tRNA ligase stretch occupies residues 619–1114 (EGLAPTATGP…LAFPLAKPRQ (496 aa)). The OB DNA-binding region spans 674 to 751 (VRIAGRLLRI…LSLLANEWRM (78 aa)). The Mg(2+) site is built by Asp1025 and Glu1032.

It in the N-terminal section; belongs to the LPG synthetase family. This sequence in the C-terminal section; belongs to the class-II aminoacyl-tRNA synthetase family. Mg(2+) is required as a cofactor.

The protein resides in the cell membrane. It catalyses the reaction tRNA(Lys) + L-lysine + ATP = L-lysyl-tRNA(Lys) + AMP + diphosphate. The catalysed reaction is L-lysyl-tRNA(Lys) + a 1,2-diacyl-sn-glycero-3-phospho-(1'-sn-glycerol) = a 1,2-diacyl-sn-glycero-3-phospho-1'-(3'-O-L-lysyl)-sn-glycerol + tRNA(Lys). In terms of biological role, catalyzes the production of L-lysyl-tRNA(Lys)transfer and the transfer of a lysyl group from L-lysyl-tRNA(Lys) to membrane-bound phosphatidylglycerol (PG), which produces lysylphosphatidylglycerol (LPG), one of the components of the bacterial membrane with a positive net charge. LPG synthesis contributes to the resistance to cationic antimicrobial peptides (CAMPs) and likely protects M.tuberculosis against the CAMPs produced by competiting microorganisms (bacteriocins). In fact, the modification of anionic phosphatidylglycerol with positively charged L-lysine results in repulsion of the peptides. This Rhodococcus jostii (strain RHA1) protein is Lysylphosphatidylglycerol biosynthesis bifunctional protein LysX (lysX).